Reading from the N-terminus, the 193-residue chain is MRLFGLILAGGEGRRMGGTDKASLTLGGRPLVTWVAERLGPQVEELAISANGDPARFAGLGLPVLRDEHPQGPLSGVLAGLRWAAAAGADALVTAPVDTPFVPGDLAPRLWLAGEGACAVAEAGGRVHPACGLWPVAVAEDLAAWLAAGEARVMGFAARHGAARAGFPDENAFLNLNAPEDLARAESLLRKDA.

Residues 8 to 10 (LAG), lysine 21, aspartate 67, and aspartate 98 contribute to the GTP site. Residue aspartate 98 coordinates Mg(2+).

The protein belongs to the MobA family. As to quaternary structure, monomer. Requires Mg(2+) as cofactor.

It is found in the cytoplasm. It catalyses the reaction Mo-molybdopterin + GTP + H(+) = Mo-molybdopterin guanine dinucleotide + diphosphate. Functionally, transfers a GMP moiety from GTP to Mo-molybdopterin (Mo-MPT) cofactor (Moco or molybdenum cofactor) to form Mo-molybdopterin guanine dinucleotide (Mo-MGD) cofactor. The chain is Molybdenum cofactor guanylyltransferase from Cereibacter sphaeroides (Rhodobacter sphaeroides).